Reading from the N-terminus, the 498-residue chain is Probable malate:quinone oxidoreductase 2 (498 aa).

It belongs to the MQO family. FAD serves as cofactor.

It carries out the reaction (S)-malate + a quinone = a quinol + oxaloacetate. It participates in carbohydrate metabolism; tricarboxylic acid cycle; oxaloacetate from (S)-malate (quinone route): step 1/1. This Staphylococcus aureus (strain MW2) protein is Probable malate:quinone oxidoreductase 2.